The following is a 321-amino-acid chain: L-carnitine dehydrogenase (321 aa).

14–19 (GSGVIG) contacts NAD(+).

This sequence belongs to the 3-hydroxyacyl-CoA dehydrogenase family. L-carnitine dehydrogenase subfamily. As to quaternary structure, homodimer.

The protein resides in the cytoplasm. It carries out the reaction carnitine + NAD(+) = 3-dehydrocarnitine + NADH + H(+). Its pathway is amine and polyamine metabolism; carnitine metabolism. Analogs of L-carnitine such as D-carnitine, glycine betaine and choline, are competitive inhibitors of L-carnitine oxidation. Functionally, catalyzes the NAD(+)-dependent oxidation of L-carnitine to 3-dehydrocarnitine. Is specific for L-carnitine and NAD(+) as substrates. D,L-3-hydroxybutyrate, L-lactate, ethanol, L-malate and D,L-isocitrate are not substrates. Is involved in a L-carnitine degradation pathway that allows P.aeruginosa to grow on L-carnitine as the sole source of carbon and nitrogen. In Pseudomonas aeruginosa (strain ATCC 15692 / DSM 22644 / CIP 104116 / JCM 14847 / LMG 12228 / 1C / PRS 101 / PAO1), this protein is L-carnitine dehydrogenase.